The following is a 273-amino-acid chain: MAVVKCKPTSPGRRHVVKVVNPELHKGKPFAPLLEKNSKSGGRNNNGRITTRHIGGGHKQAYRIVDFKRNKDGIPAVVERLEYDPNRSANIALVLYKDGERRYILAPKGLKAGDQIQSGVDAAIKPGNTLPMRNIPVGSTVHNVEMKPGKGGQLARSAGTYVQIVARDGAYVTLRLRSGEMRKVEADCRATLGEVGNAEHMLRVLGKAGAARWRGVRPTVRGTAMNPVDHPHGGGEGRNFGKHPVTPWGVQTKGKKTRSNKRTDKFIVRRRSK.

Disordered regions lie at residues 28–53 and 221–273; these read KPFA…TTRH and RGTA…RRSK. The segment covering 39–48 has biased composition (low complexity); sequence KSGGRNNNGR. K242 carries the N6-acetyllysine modification.

Belongs to the universal ribosomal protein uL2 family. In terms of assembly, part of the 50S ribosomal subunit. Forms a bridge to the 30S subunit in the 70S ribosome.

One of the primary rRNA binding proteins. Required for association of the 30S and 50S subunits to form the 70S ribosome, for tRNA binding and peptide bond formation. It has been suggested to have peptidyltransferase activity; this is somewhat controversial. Makes several contacts with the 16S rRNA in the 70S ribosome. In Escherichia coli (strain SE11), this protein is Large ribosomal subunit protein uL2.